Consider the following 105-residue polypeptide: Large ribosomal subunit protein eL36 (105 aa).

Residues 1–36 form a disordered region; sequence MAQERSGIAVGLNKGHKTTPLNTPKTRISRSKGKAS. Over residues 27–36 the composition is skewed to basic residues; the sequence is RISRSKGKAS.

Belongs to the eukaryotic ribosomal protein eL36 family. Component of the large ribosomal subunit (LSU).

The protein localises to the cytoplasm. Component of the ribosome, a large ribonucleoprotein complex responsible for the synthesis of proteins in the cell. The small ribosomal subunit (SSU) binds messenger RNAs (mRNAs) and translates the encoded message by selecting cognate aminoacyl-transfer RNA (tRNA) molecules. The large subunit (LSU) contains the ribosomal catalytic site termed the peptidyl transferase center (PTC), which catalyzes the formation of peptide bonds, thereby polymerizing the amino acids delivered by tRNAs into a polypeptide chain. The nascent polypeptides leave the ribosome through a tunnel in the LSU and interact with protein factors that function in enzymatic processing, targeting, and the membrane insertion of nascent chains at the exit of the ribosomal tunnel. The protein is Large ribosomal subunit protein eL36 of Emericella nidulans (strain FGSC A4 / ATCC 38163 / CBS 112.46 / NRRL 194 / M139) (Aspergillus nidulans).